A 605-amino-acid polypeptide reads, in one-letter code: uncharacterized protein (605 aa).

Disordered regions lie at residues 10–78 (RRGG…FPPA) and 216–248 (RAPD…VRNP). The segment covering 20-48 (AGGRPAAGGRPAAGGRPAAGSRAAAGAAG) has biased composition (low complexity). A compositionally biased stretch (pro residues) spans 220 to 233 (CPSPRTPMVKPPFR).

This is an uncharacterized protein from Dryophytes versicolor (chameleon treefrog).